Consider the following 1380-residue polypeptide: DNA-directed RNA polymerase subunit beta (1380 aa).

This sequence belongs to the RNA polymerase beta chain family. The RNAP catalytic core consists of 2 alpha, 1 beta, 1 beta' and 1 omega subunit. When a sigma factor is associated with the core the holoenzyme is formed, which can initiate transcription.

It carries out the reaction RNA(n) + a ribonucleoside 5'-triphosphate = RNA(n+1) + diphosphate. DNA-dependent RNA polymerase catalyzes the transcription of DNA into RNA using the four ribonucleoside triphosphates as substrates. This chain is DNA-directed RNA polymerase subunit beta, found in Sinorhizobium fredii (strain NBRC 101917 / NGR234).